The following is a 243-amino-acid chain: UPF0246 protein SAK_2020 (243 aa).

This sequence belongs to the UPF0246 family.

This is UPF0246 protein SAK_2020 from Streptococcus agalactiae serotype Ia (strain ATCC 27591 / A909 / CDC SS700).